Here is a 432-residue protein sequence, read N- to C-terminus: MEKITLAPISRVEGEINLPGSKSLSNRALLLAALAKGTTKVTNLLDSDDIRHMLNALKALGVNYSLSEDKTVCTVEGVGGAFNWKNGLALFLGNAGTAMRPLTAALCLKGSSEAEVVLTGEPRMKERPIKHLVDALRQAGASVQYLENEGYPPVAIRNSGLKGGKVQIDGSISSQFLTALLMAAPLAEGDMEIEIIGELVSKPYIDITLAMMKDFGVKVENRNYQTFVVKGNQSYLSPEKYLVEGDASSASYFLAAGAIKGKVKVTGIGKNSIQGDRLFANVLEAMGAKITWGDDFIQAEQGKLKGVDMDMNHIPDAAMTIATAALFAEGETVIRNIYNWRVKETDRLTAMATELRKVGATVEEGEDFIRIQPLPLTQFQHAEIATYNDHRMAMCFSLIALSDTPVTILDPKCTAKTFPTYFTEFEKLSERT.

The 3-phosphoshikimate site is built by K22, S23, and R27. A phosphoenolpyruvate-binding site is contributed by K22. Phosphoenolpyruvate contacts are provided by G96 and R127. The 3-phosphoshikimate site is built by S173, S174, Q175, S201, D316, N339, and K343. Residue Q175 coordinates phosphoenolpyruvate. D316 acts as the Proton acceptor in catalysis. Phosphoenolpyruvate contacts are provided by R347, R391, and K416.

It belongs to the EPSP synthase family. In terms of assembly, monomer.

The protein localises to the cytoplasm. The enzyme catalyses 3-phosphoshikimate + phosphoenolpyruvate = 5-O-(1-carboxyvinyl)-3-phosphoshikimate + phosphate. Its pathway is metabolic intermediate biosynthesis; chorismate biosynthesis; chorismate from D-erythrose 4-phosphate and phosphoenolpyruvate: step 6/7. Its function is as follows. Catalyzes the transfer of the enolpyruvyl moiety of phosphoenolpyruvate (PEP) to the 5-hydroxyl of shikimate-3-phosphate (S3P) to produce enolpyruvyl shikimate-3-phosphate and inorganic phosphate. The protein is 3-phosphoshikimate 1-carboxyvinyltransferase of Actinobacillus pleuropneumoniae serotype 5b (strain L20).